We begin with the raw amino-acid sequence, 128 residues long: Large ribosomal subunit protein bL17 (128 aa).

The protein belongs to the bacterial ribosomal protein bL17 family. As to quaternary structure, part of the 50S ribosomal subunit. Contacts protein L32.

The sequence is that of Large ribosomal subunit protein bL17 from Baumannia cicadellinicola subsp. Homalodisca coagulata.